Reading from the N-terminus, the 1358-residue chain is MSYSYAEKKRIRKEFGVLPHILDVPYLLSIQTESYKKFLTVDAAKGRLHSGLEIVLKQSFPVESKNGQYELHYVDYQIGEPTFDETECQVRGATYDAPLNVKLRLVVYNKDALPNEKIVEDIREEYVYMGDIPLMTTNGTFIINGTERVVVSQLHRSPGAFFSKDDSEEGAFSARIIPYRGSWLDFEFDSKGIIWARIDRKRKFCATVILKALGYTQEQILENFSESKTITFNSKGFALRLDNLSNMKGELLKFDIVDAQDNVIVKKNKKLTSRDVKKIKDAGVDSVAIDFDLVSTLRVAKDIVNEATGEVIAYANDDVTESLLKSCVEVGMLELEVIDFITTERGRYISDTLKYDLTRNTDEALVEIYKVLRPGDPPAAASVKALFEGLFFIESRYSLSDIGRMKLNARLGSDKVSKDIYTLENSDIVGVIEELINIRDGKGKVDDIDHLGNRRVRSVGEMVENQFRIGLYRVEKGIRESMSLVHKDKLMPKDIVNSKPITAAIKEFFTSGALSQFMDQDNPLSEVTHKRRISALGPGGLSRDRAGFEVRDVHATHYGRLCPIETPEGPNIGLINSLASYARVNDYGFLEAPYRKVVDGKVTDEIEYLSAIDEDNYVIAQASTKLDENNHFVEDIIQCRSGGEAIFTESSRVQYMDVSAKQMVSAAAALIPFLEHDDANRVLMGANMQRQAVPTLKSEKPLVGTGMEKIVARDSGNCIIARNVGEVAEVDSNRIVIKVDTEKSQTSNLVDIYSLTKFKRSNKNTCINQRPIVNVGDKVEAGDILADGFATDFGELSLGHNLMVAFMPWNGYNFEDSILLSERIVKDDKYTSIHIEEFTCVARDTKLGPEEITADIPNVSESSLAKLDESGIVHIGANVEAGDILVAKITPKAEQQLTPEERLLRAIFNEKASNVVDSSLRMPSGTSGTVINVQVFENDKGGKSKRALKIEKELIDKARKDFDEEFAVIESVVKSSIEQEVVGAKIQKAKGLKKGAILTKEFLATLPLSKWLEISFEDEKLEEKVQNAREYYEEAKIAIDAKFEAKKKSITQSNELSPGVLKTVKVFVAIKKRIQPGDKMAGRHGNKGVVSRVLPVEDMPYMEDGTPVDVCLNPLGIPSRMNIGQILEAHLGLASYGLGKKIEKTLEKTRKAAELRKTLEEVYNSVGDKKVNLEALNDEEILTLCDNLKGGVPIATPVFDGAKEEDIKSLLKIGGFATNGQMKLFDGRTGKPFDRHVTVGYMYMLKLDHLVDDKMHARSTGSYSLVTQQPLGGKAQFGGQRFGEMEVWALQAYGAAYTLREMLTVKSDDIAGRSKMYKNIVDGKLTMNVDVPESFNVLRNEVRALGIDMDFDYSSEEE.

It belongs to the RNA polymerase beta chain family. In terms of assembly, the RNAP catalytic core consists of 2 alpha, 1 beta, 1 beta' and 1 omega subunit. When a sigma factor is associated with the core the holoenzyme is formed, which can initiate transcription.

It carries out the reaction RNA(n) + a ribonucleoside 5'-triphosphate = RNA(n+1) + diphosphate. In terms of biological role, DNA-dependent RNA polymerase catalyzes the transcription of DNA into RNA using the four ribonucleoside triphosphates as substrates. This Francisella tularensis subsp. holarctica (strain LVS) protein is DNA-directed RNA polymerase subunit beta.